The primary structure comprises 813 residues: Cadherin-22 (813 aa).

An N-terminal signal peptide occupies residues 1–33; it reads MRPRPAGALRAGAALSPVLLLLLLLQLLGHLWA. Residues 34–621 lie on the Extracellular side of the membrane; sequence ASTPAPSSLS…AFVMAASLSP (588 aa). 5 consecutive Cadherin domains span residues 61-165, 166-274, 275-391, 392-495, and 496-613; these read WVWN…EPRF, LHGP…PPRF, PQKM…PPEF, RPPS…NPPE, and LATP…TTAF. N159 carries N-linked (GlcNAc...) asparagine glycosylation. 2 N-linked (GlcNAc...) asparagine glycosylation sites follow: N463 and N609. Residues 622–642 traverse the membrane as a helical segment; sequence GALIALLVCVLILVVLALLIL. Over 643–813 the chain is Cytoplasmic; sequence TLRRHHKSHL…HRGDDEAPAS (171 aa). Positions 696–726 are disordered; it reads GGDPGGGAASPPQAASSSERHSLPRGPSSPE.

In terms of tissue distribution, strongly expressed in the pituitary gland and the brain (in the inner granular and glomerular layers of the olfactory bulb, anterior olfactory nucleus, primary olfactory cortex, Purkinje cell layer of cerebellum, and pineal gland). Low expression in lung and heart. No expression in submandibular gland, thymus, liver, spleen, adrenal, and kidney.

The protein resides in the cell membrane. In terms of biological role, cadherins are calcium-dependent cell adhesion proteins. They preferentially interact with themselves in a homophilic manner in connecting cells; cadherins may thus contribute to the sorting of heterogeneous cell types. PB-cadherins may have a role in the morphological organization of pituitary gland and brain tissues. The polypeptide is Cadherin-22 (Cdh22) (Rattus norvegicus (Rat)).